We begin with the raw amino-acid sequence, 154 residues long: Catabolic 3-dehydroquinase (154 aa).

Tyr25 (proton acceptor) is an active-site residue. Substrate contacts are provided by Asn79, His85, and Asp92. His105 (proton donor) is an active-site residue. Substrate contacts are provided by residues Ile106–Ser107 and Arg116.

The protein belongs to the type-II 3-dehydroquinase family. Homododecamer. Adopts a ring-like structure, composed of an arrangement of two hexameric rings stacked on top of one another.

The catalysed reaction is 3-dehydroquinate = 3-dehydroshikimate + H2O. The protein operates within aromatic compound metabolism; 3,4-dihydroxybenzoate biosynthesis; 3,4-dihydroxybenzoate from 3-dehydroquinate: step 1/2. Functionally, is involved in the catabolism of quinate. Allows the utilization of quinate as carbon source via the beta-ketoadipate pathway. The chain is Catabolic 3-dehydroquinase from Sclerotinia sclerotiorum (strain ATCC 18683 / 1980 / Ss-1) (White mold).